Consider the following 437-residue polypeptide: GTPase Era, mitochondrial (437 aa).

The N-terminal 20 residues, 1 to 20, are a transit peptide targeting the mitochondrion; the sequence is MAAPRRYFPGIVRALLGAWQ. In terms of domain architecture, Era-type G spans 112-330; that stretch reads RVLRVVLLGA…QYLLTQAQPG (219 aa). The interval 120–127 is G1; sequence GAPNAGKS. 120–127 is a GTP binding site; sequence GAPNAGKS. Residues 146 to 150 are G2; that stretch reads HTTRC. The interval 167-170 is G3; the sequence is DTPG. 167–171 provides a ligand contact to GTP; sequence DTPGI. S173 carries the post-translational modification Phosphoserine. A GTP-binding site is contributed by 236 to 239; that stretch reads NKVD. The segment at 236 to 239 is G4; it reads NKVD. The segment at 272–293 is disordered; the sequence is SRPSTHCPGPETEDPNTHAVRS. The tract at residues 308-310 is G5; that stretch reads LSA. The KH type-2 domain occupies 360-437; that stretch reads LPEEVPYSVQ…LLRLSVKLLK (78 aa).

Belongs to the TRAFAC class TrmE-Era-EngA-EngB-Septin-like GTPase superfamily. Era GTPase family.

It localises to the mitochondrion matrix. Its subcellular location is the mitochondrion inner membrane. Its function is as follows. Probable GTPase that plays a role in the mitochondrial ribosomal small subunit assembly. Specifically binds the 12S mitochondrial rRNA (12S mt-rRNA) to a 33 nucleotide section delineating the 3' terminal stem-loop region. May act as a chaperone that protects the 12S mt-rRNA on the 28S mitoribosomal subunit during ribosomal small subunit assembly. The sequence is that of GTPase Era, mitochondrial (Eral1) from Rattus norvegicus (Rat).